Reading from the N-terminus, the 260-residue chain is Major prion protein (260 aa).

The signal sequence occupies residues 1–22; the sequence is MANLGCWMLVLFVATWSDLGLC. Residues 23 to 237 form an interaction with GRB2, ERI3 and SYN1 region; the sequence is KKRPKPGGWN…ESQAYYQRGS (215 aa). Residues 26-112 are disordered; sequence PKPGGWNTGG…HNQWNKPSKP (87 aa). 6 tandem repeats follow at residues 51–58, 59–66, 67–74, 75–82, 83–90, and 91–98. The tract at residues 51-98 is 6 X 8 AA tandem repeats of P-H-G-G-G-W-G-Q; the sequence is PQGGGWGQPHGGGWGQPHGGGWGQPHGGGWGQPHGGGWGQPHGGGWGQ. Gly residues predominate over residues 52–102; the sequence is QGGGWGQPHGGGWGQPHGGGWGQPHGGGWGQPHGGGWGQPHGGGWGQGGGT. Cu(2+)-binding residues include H68, G69, G70, H76, G77, G78, H84, G85, G86, H92, G93, and G94. Cysteines 186 and 221 form a disulfide. N188 and N204 each carry an N-linked (GlcNAc...) asparagine glycan. S237 is lipidated: GPI-anchor amidated serine. A propeptide spans 238–260 (removed in mature form); that stretch reads SMVLFSSPPVILLISFLIFLIVG.

The protein belongs to the prion family. In terms of assembly, monomer and homodimer. Has a tendency to aggregate into amyloid fibrils containing a cross-beta spine, formed by a steric zipper of superposed beta-strands. Soluble oligomers may represent an intermediate stage on the path to fibril formation. Copper binding may promote oligomerization. Interacts with GRB2, APP, ERI3/PRNPIP and SYN1. Mislocalized cytosolically exposed PrP interacts with MGRN1; this interaction alters MGRN1 subcellular location and causes lysosomal enlargement. Interacts with KIAA1191.

It localises to the cell membrane. Its subcellular location is the golgi apparatus. Its primary physiological function is unclear. Has cytoprotective activity against internal or environmental stresses. May play a role in neuronal development and synaptic plasticity. May be required for neuronal myelin sheath maintenance. May play a role in iron uptake and iron homeostasis. Soluble oligomers are toxic to cultured neuroblastoma cells and induce apoptosis (in vitro). Association with GPC1 (via its heparan sulfate chains) targets PRNP to lipid rafts. Also provides Cu(2+) or Zn(2+) for the ascorbate-mediated GPC1 deaminase degradation of its heparan sulfate side chains. This chain is Major prion protein (PRNP), found in Saimiri sciureus (Common squirrel monkey).